The primary structure comprises 343 residues: Probable dual-specificity RNA methyltransferase RlmN (343 aa).

The active-site Proton acceptor is the Glu-91. The Radical SAM core domain occupies 97-326 (HPDRITACIS…AEIRREKGAD (230 aa)). The cysteines at positions 104 and 331 are disulfide-linked. Residues Cys-111, Cys-115, and Cys-118 each coordinate [4Fe-4S] cluster. S-adenosyl-L-methionine is bound by residues 158–159 (GE), Ser-190, 213–215 (SLH), and Asn-289. The S-methylcysteine intermediate role is filled by Cys-331.

This sequence belongs to the radical SAM superfamily. RlmN family. [4Fe-4S] cluster serves as cofactor.

The protein resides in the cytoplasm. The enzyme catalyses adenosine(2503) in 23S rRNA + 2 reduced [2Fe-2S]-[ferredoxin] + 2 S-adenosyl-L-methionine = 2-methyladenosine(2503) in 23S rRNA + 5'-deoxyadenosine + L-methionine + 2 oxidized [2Fe-2S]-[ferredoxin] + S-adenosyl-L-homocysteine. The catalysed reaction is adenosine(37) in tRNA + 2 reduced [2Fe-2S]-[ferredoxin] + 2 S-adenosyl-L-methionine = 2-methyladenosine(37) in tRNA + 5'-deoxyadenosine + L-methionine + 2 oxidized [2Fe-2S]-[ferredoxin] + S-adenosyl-L-homocysteine. Its function is as follows. Specifically methylates position 2 of adenine 2503 in 23S rRNA and position 2 of adenine 37 in tRNAs. This chain is Probable dual-specificity RNA methyltransferase RlmN, found in Thermotoga petrophila (strain ATCC BAA-488 / DSM 13995 / JCM 10881 / RKU-1).